We begin with the raw amino-acid sequence, 377 residues long: Mannan endo-1,4-beta-mannosidase A (377 aa).

The first 18 residues, 1–18, serve as a signal peptide directing secretion; it reads MKLSHMLLSLASLGVATA. Substrate is bound at residue tryptophan 84. Residue asparagine 105 is glycosylated (N-linked (GlcNAc...) asparagine). Asparagine 197 provides a ligand contact to substrate. The active-site Proton donor is glutamate 198. A glycan (N-linked (GlcNAc...) asparagine) is linked at asparagine 255. Tyrosine 273 is a binding site for substrate. The Nucleophile role is filled by glutamate 306. Residue asparagine 326 is glycosylated (N-linked (GlcNAc...) asparagine). Tryptophan 336 provides a ligand contact to substrate. An N-linked (GlcNAc...) asparagine glycan is attached at asparagine 357.

Belongs to the glycosyl hydrolase 5 (cellulase A) family.

It localises to the secreted. It catalyses the reaction Random hydrolysis of (1-&gt;4)-beta-D-mannosidic linkages in mannans, galactomannans and glucomannans.. Its function is as follows. Endo-1,4-mannanase, a crucial enzyme for depolymerization of seed galactomannans and wood galactoglucomannans. The chain is Mannan endo-1,4-beta-mannosidase A (manA) from Aspergillus aculeatus.